A 378-amino-acid polypeptide reads, in one-letter code: Erythronate-4-phosphate dehydrogenase (378 aa).

Substrate-binding residues include serine 45 and threonine 66. NAD(+) contacts are provided by aspartate 146 and threonine 175. Arginine 208 is an active-site residue. Aspartate 232 is an NAD(+) binding site. Glutamate 237 is a catalytic residue. The Proton donor role is filled by histidine 254. Glycine 257 provides a ligand contact to NAD(+). Position 258 (tyrosine 258) interacts with substrate.

It belongs to the D-isomer specific 2-hydroxyacid dehydrogenase family. PdxB subfamily. Homodimer.

Its subcellular location is the cytoplasm. The catalysed reaction is 4-phospho-D-erythronate + NAD(+) = (R)-3-hydroxy-2-oxo-4-phosphooxybutanoate + NADH + H(+). The protein operates within cofactor biosynthesis; pyridoxine 5'-phosphate biosynthesis; pyridoxine 5'-phosphate from D-erythrose 4-phosphate: step 2/5. Catalyzes the oxidation of erythronate-4-phosphate to 3-hydroxy-2-oxo-4-phosphonooxybutanoate. This is Erythronate-4-phosphate dehydrogenase from Shigella dysenteriae serotype 1 (strain Sd197).